Here is a 788-residue protein sequence, read N- to C-terminus: Integrin beta-3 (788 aa).

Residues 1 to 26 form the signal peptide; that stretch reads MRARPRPRPLWATVLALGALAGVGVG. Over 27 to 718 the chain is Extracellular; sequence GPNICTTRGV…EEPECPKGPD (692 aa). Residues 30–76 form the PSI domain; sequence ICTTRGVSSCQQCLAVSPMCAWCSDEALPLGSPRCDLKENLLKDNCA. Disulfide bonds link Cys-31-Cys-49, Cys-39-Cys-461, Cys-42-Cys-64, Cys-52-Cys-75, Cys-203-Cys-210, Cys-258-Cys-299, Cys-400-Cys-412, Cys-432-Cys-459, Cys-463-Cys-483, Cys-474-Cys-486, Cys-488-Cys-497, Cys-499-Cys-529, Cys-512-Cys-527, Cys-521-Cys-532, Cys-534-Cys-547, Cys-549-Cys-570, Cys-554-Cys-568, Cys-562-Cys-573, and Cys-575-Cys-584. Asn-125 is a glycosylation site (N-linked (GlcNAc...) asparagine). The 243-residue stretch at 135 to 377 folds into the VWFA domain; it reads DYPVDIYYLM…QLIVDAYGKI (243 aa). Mg(2+)-binding residues include Ser-147 and Ser-149. Residues Ser-149, Asp-152, Asp-153, and Asp-184 each coordinate Ca(2+). Positions 203–210 are involved in CX3CL1-, NRG1-, FGF1- and IGF1-binding; the sequence is CYDMKTTC. Residues Asn-241, Asp-243, Pro-245, Glu-246, and Asp-277 each coordinate Ca(2+). Mg(2+) is bound at residue Glu-246. Residues 293 to 313 form a CX3CL1-binding region; that stretch reads QPNDGQCHVGSDNHYSASTTM. Asn-346 carries N-linked (GlcNAc...) asparagine glycosylation. Met-361 lines the Ca(2+) pocket. Asn-397 carries N-linked (GlcNAc...) asparagine glycosylation. I-EGF domains follow at residues 463 to 498, 499 to 548, 549 to 585, and 586 to 625; these read CQAQ…SQCE, CSEE…KYCE, CDDF…YYCN, and CTTR…DTCE. N-linked (GlcNAc...) asparagine glycosylation occurs at Asn-478. Asn-585 carries an N-linked (GlcNAc...) asparagine glycan. 9 disulfide bridges follow: Cys-586–Cys-609, Cys-593–Cys-607, Cys-601–Cys-612, Cys-614–Cys-624, Cys-627–Cys-630, Cys-634–Cys-681, Cys-640–Cys-661, Cys-643–Cys-657, and Cys-689–Cys-713. N-linked (GlcNAc...) asparagine glycosylation occurs at Asn-680. The helical transmembrane segment at 719–741 threads the bilayer; the sequence is ILVVLLSVMGAILLIGLAALLIW. Topologically, residues 742-788 are cytoplasmic; sequence KLLITIHDRKEFAKFEEERARAKWDTANNPLYKEATSTFTNITYRGT. Thr-767 bears the Phosphothreonine mark. Phosphotyrosine is present on Tyr-773. Positions 777 to 783 match the LIR motif; sequence TSTFTNI. Thr-779 carries the phosphothreonine; by PDPK1 and PKB/AKT1; in vitro modification. Residue Tyr-785 is modified to Phosphotyrosine.

The protein belongs to the integrin beta chain family. Heterodimer of an alpha and a beta subunit. Beta-3 (ITGB3) associates with either alpha-IIb (ITGA2B) or alpha-V (ITGAV). Isoform Beta-3C interacts with FLNB. Interacts with COMP. Interacts with PDIA6 following platelet stimulation. Interacts with SYK; upon activation by ITGB3 promotes platelet adhesion. Interacts with MYO10. Interacts with DAB2. Interacts with FERMT2. Interacts with EMP2; regulates the levels of the heterodimer ITGA5:ITGB3 integrin expression on the plasma membrane. Integrin ITGAV:ITGB3 interacts with FBLN5 (via N-terminus). ITGAV:ITGB3 interacts with CCN3. ITGAV:ITGB3 and ITGA2B:ITGB3 interact with SELP (via C-type lectin domain); the interaction mediates cell-cell interaction and adhesion. ITGAV:ITGB3 is found in a ternary complex with CX3CR1 and CX3CL1. ITGAV:ITGB3 is found in a ternary complex with NRG1 and ERBB3. ITGAV:ITGB3 is found in a ternary complex with FGF1 and FGFR1. ITGAV:ITGB3 interacts with FGF2; it is likely that FGF2 can simultaneously bind ITGAV:ITGB3 and FGF receptors. ITGAV:ITGB3 binds to IL1B. ITGAV:ITGB3 is found in a ternary complex with IGF1 and IGF1R. ITGAV:ITGB3 interacts with IGF2. ITGAV:ITGB3 interacts with FBN1. ITGAV:ITGB3 interacts with CD9, CD81 and CD151 (via second extracellular domain). Interacts (via the allosteric site (site 2)) with CXCL12 in a CXCR4-independent manner. Interacts with MXRA8/DICAM; the interaction inhibits ITGAV:ITGB3 heterodimer formation. ITGAV:ITGB3 interacts with PTN. Forms a complex with PTPRZ1 and PTN that stimulates endothelial cell migration through ITGB3 Tyr-773 phosphorylation. ITGAV:ITGB3 interacts with SLC6A4. Interacts with SLC6A4 (via C-terminus); this interaction regulates SLC6A4 trafficking. ITGA2B:ITGB3 interacts with PPIA/CYPA; the interaction is ROS and PPIase activity-dependent and is increased in the presence of thrombin. Interacts with tensin TNS3; TNS3 also interacts with PEAK1, thus acting as an adapter molecule to bridge the association of PEAK1 with ITGB3. Interacts with TM4SF19. As to quaternary structure, (Microbial infection) Integrin ITGAV:ITGB3 interacts with herpes virus 8/HHV-8 glycoprotein B. In terms of assembly, (Microbial infection) Integrin ITGAV:ITGB3 interacts with coxsackievirus A9 capsid proteins. (Microbial infection) Interacts with Hantaan virus glycoprotein G. As to quaternary structure, (Microbial infection) Integrin ITGAV:ITGB3 interacts with cytomegalovirus/HHV-5 gH:gL proteins. In terms of assembly, (Microbial infection) Integrin ITGA5:ITGB3 interacts with human metapneumovirus fusion protein. (Microbial infection) Integrin ITGAV:ITGB3 interacts with human parechovirus 1 capsid proteins. As to quaternary structure, (Microbial infection) Integrin ITGAV:ITGB3 interacts with west nile virus envelope protein E. In terms of assembly, (Microbial infection) Interacts with HIV-1 Tat. ITGAV:ITGB3 interacts with AGRA2. In terms of processing, phosphorylated on tyrosine residues in response to thrombin-induced platelet aggregation. Probably involved in outside-in signaling. A peptide (AA 740-762) is capable of binding GRB2 only when both Tyr-773 and Tyr-785 are phosphorylated. Phosphorylation of Thr-779 inhibits SHC binding. Isoform beta-3A and isoform beta-3C are widely expressed. Isoform beta-3A is specifically expressed in osteoblast cells; isoform beta-3C is specifically expressed in prostate and testis.

The protein localises to the cell membrane. Its subcellular location is the cell projection. It localises to the lamellipodium membrane. The protein resides in the cell junction. It is found in the focal adhesion. The protein localises to the postsynaptic cell membrane. Its subcellular location is the synapse. In terms of biological role, integrin alpha-V/beta-3 (ITGAV:ITGB3) is a receptor for cytotactin, fibronectin, laminin, matrix metalloproteinase-2, osteopontin, osteomodulin, prothrombin, thrombospondin, vitronectin and von Willebrand factor. Integrin alpha-IIb/beta-3 (ITGA2B:ITGB3) is a receptor for fibronectin, fibrinogen, plasminogen, prothrombin, thrombospondin and vitronectin. Integrins alpha-IIb/beta-3 and alpha-V/beta-3 recognize the sequence R-G-D in a wide array of ligands. Integrin alpha-IIb/beta-3 recognizes the sequence H-H-L-G-G-G-A-K-Q-A-G-D-V in fibrinogen gamma chain. Following activation integrin alpha-IIb/beta-3 brings about platelet/platelet interaction through binding of soluble fibrinogen. This step leads to rapid platelet aggregation which physically plugs ruptured endothelial surface. Fibrinogen binding enhances SELP expression in activated platelets. ITGAV:ITGB3 binds to fractalkine (CX3CL1) and acts as its coreceptor in CX3CR1-dependent fractalkine signaling. ITGAV:ITGB3 binds to NRG1 (via EGF domain) and this binding is essential for NRG1-ERBB signaling. ITGAV:ITGB3 binds to FGF1 and this binding is essential for FGF1 signaling. ITGAV:ITGB3 binds to FGF2 and this binding is essential for FGF2 signaling. ITGAV:ITGB3 binds to IGF1 and this binding is essential for IGF1 signaling. ITGAV:ITGB3 binds to IGF2 and this binding is essential for IGF2 signaling. ITGAV:ITGB3 binds to IL1B and this binding is essential for IL1B signaling. ITGAV:ITGB3 binds to PLA2G2A via a site (site 2) which is distinct from the classical ligand-binding site (site 1) and this induces integrin conformational changes and enhanced ligand binding to site 1. ITGAV:ITGB3 acts as a receptor for fibrillin-1 (FBN1) and mediates R-G-D-dependent cell adhesion to FBN1. In brain, plays a role in synaptic transmission and plasticity. Involved in the regulation of the serotonin neurotransmission, is required to localize to specific compartments within the synapse the serotonin receptor SLC6A4 and for an appropriate reuptake of serotonin. Controls excitatory synaptic strength by regulating GRIA2-containing AMPAR endocytosis, which affects AMPAR abundance and composition. ITGAV:ITGB3 act as a receptor for CD40LG. ITGAV:ITGB3 acts as a receptor for IBSP and promotes cell adhesion and migration to IBSP. (Microbial infection) Integrin ITGAV:ITGB3 acts as a receptor for Herpes virus 8/HHV-8. Functionally, (Microbial infection) Integrin ITGAV:ITGB3 acts as a receptor for Coxsackievirus A9. Its function is as follows. (Microbial infection) Acts as a receptor for Hantaan virus. In terms of biological role, (Microbial infection) Integrin ITGAV:ITGB3 acts as a receptor for Cytomegalovirus/HHV-5. (Microbial infection) Integrin ITGA5:ITGB3 acts as a receptor for Human metapneumovirus. Functionally, (Microbial infection) Integrin ITGAV:ITGB3 acts aP05556s a receptor for Human parechovirus 1. Its function is as follows. (Microbial infection) Integrin ITGAV:ITGB3 acts as a receptor for West nile virus. In terms of biological role, (Microbial infection) In case of HIV-1 infection, the interaction with extracellular viral Tat protein seems to enhance angiogenesis in Kaposi's sarcoma lesions. The chain is Integrin beta-3 from Homo sapiens (Human).